We begin with the raw amino-acid sequence, 550 residues long: Tyrosinase HcTyr2 (550 aa).

Cu cation contacts are provided by histidine 56, histidine 84, histidine 93, histidine 282, histidine 286, and histidine 326.

Belongs to the tyrosinase family. Requires Cu(2+) as cofactor.

It catalyses the reaction L-tyrosine + O2 = L-dopaquinone + H2O. The catalysed reaction is 2 L-tyrosine + O2 = 2 L-dopa. It carries out the reaction 2 L-dopa + O2 = 2 L-dopaquinone + 2 H2O. Copper-containing oxidase that catalyzes the conversion of L-tyrosine to L-dopa and then to L-dopaquinone. Can use various phenols such as p-coumaric acid, phenol, pyrocatechol, syringol or pyrogallol. Accepts several of the constituents of lignin and potentially participates in lignin functionalization. The protein is Tyrosinase HcTyr2 of Hahella sp. (strain CCB-MM4).